The following is a 194-amino-acid chain: 7-methyl-GTP pyrophosphatase (194 aa).

Aspartate 69 acts as the Proton acceptor in catalysis.

Belongs to the Maf family. YceF subfamily. The cofactor is a divalent metal cation.

Its subcellular location is the cytoplasm. The enzyme catalyses N(7)-methyl-GTP + H2O = N(7)-methyl-GMP + diphosphate + H(+). Its function is as follows. Nucleoside triphosphate pyrophosphatase that hydrolyzes 7-methyl-GTP (m(7)GTP). May have a dual role in cell division arrest and in preventing the incorporation of modified nucleotides into cellular nucleic acids. The sequence is that of 7-methyl-GTP pyrophosphatase (yceF) from Salmonella typhimurium (strain LT2 / SGSC1412 / ATCC 700720).